The chain runs to 95 residues: uncharacterized protein (95 aa).

Over residues 1-12 the composition is skewed to low complexity; sequence MQNFMNNLSGGS. The segment at 1–27 is disordered; it reads MQNFMNNLSGGSNKEGGEKSNDFLSSA.

This is an uncharacterized protein from Schizosaccharomyces pombe (strain 972 / ATCC 24843) (Fission yeast).